Here is a 319-residue protein sequence, read N- to C-terminus: Sliding-clamp-loader large subunit (319 aa).

ATP is bound by residues 12-15 (EQKY), Ile-24, 53-58 (GTGKTT), and Arg-205.

The protein belongs to the Tevenvirinae sliding-clamp-loader large subunit family. The sliding-clamp-loader consists of 4 large subunits and 1 small subunit. Interacts with the sliding clamp; this interaction allows the sliding-clamp-loader to open the sliding clamp. Part of the replicase complex that includes the DNA polymerase, the polymerase clamp, the clamp loader complex, the single-stranded DNA binding protein, the primase, the helicase and the helicase assembly factor.

In terms of biological role, forms the sliding-clamp-loader together with the small subunit. Functions as an ATPase enzyme. The clamp loader holds the clamp in an open conformation and places it onto the DNA. 4 ATP molecules must bind to the sliding-clamp-loader before the latter can open the sliding clamp. ATP hydrolysis triggers the detachment of the sliding clamp from the sliding-clamp-loader, freeing the sliding clamp to track along DNA. In Enterobacteria phage T4 (Bacteriophage T4), this protein is Sliding-clamp-loader large subunit (44).